The following is a 714-amino-acid chain: Fatty acid oxidation complex subunit alpha (714 aa).

An enoyl-CoA hydratase region spans residues 1-190 (MEMASVFTLN…KLGLVDDVVP (190 aa)). Positions 306–714 (APLNSVGILG…FWKTTATDLQ (409 aa)) are 3-hydroxyacyl-CoA dehydrogenase.

It in the N-terminal section; belongs to the enoyl-CoA hydratase/isomerase family. The protein in the central section; belongs to the 3-hydroxyacyl-CoA dehydrogenase family. Heterotetramer of two alpha chains (FadJ) and two beta chains (FadI).

The protein localises to the cytoplasm. The catalysed reaction is a (3S)-3-hydroxyacyl-CoA = a (2E)-enoyl-CoA + H2O. The enzyme catalyses a 4-saturated-(3S)-3-hydroxyacyl-CoA = a (3E)-enoyl-CoA + H2O. It carries out the reaction a (3S)-3-hydroxyacyl-CoA + NAD(+) = a 3-oxoacyl-CoA + NADH + H(+). It catalyses the reaction (3S)-3-hydroxybutanoyl-CoA = (3R)-3-hydroxybutanoyl-CoA. Its pathway is lipid metabolism; fatty acid beta-oxidation. Functionally, catalyzes the formation of a hydroxyacyl-CoA by addition of water on enoyl-CoA. Also exhibits 3-hydroxyacyl-CoA epimerase and 3-hydroxyacyl-CoA dehydrogenase activities. This Escherichia coli O139:H28 (strain E24377A / ETEC) protein is Fatty acid oxidation complex subunit alpha.